A 131-amino-acid polypeptide reads, in one-letter code: Secreted RxLR effector protein 45 (131 aa).

The N-terminal stretch at 1 to 16 (MSIFIFISLVLGLAHQ) is a signal peptide. The short motif at 56–59 (RPLR) is the RxLR element. Residue asparagine 128 is glycosylated (N-linked (GlcNAc...) asparagine).

It belongs to the RxLR effector family.

Its subcellular location is the secreted. The protein localises to the host nucleus. Secreted effector that completely suppresses the host cell death induced by cell death-inducing proteins. The chain is Secreted RxLR effector protein 45 from Plasmopara viticola (Downy mildew of grapevine).